Here is a 420-residue protein sequence, read N- to C-terminus: UPF0053 protein HI_0107 (420 aa).

Positions 2–190 (DSIPLSTLFI…GEATPNEQHP (189 aa)) constitute a CNNM transmembrane domain. A run of 4 helical transmembrane segments spans residues 3–23 (SIPLSTLFIILIICLVLSAYF), 65–85 (FILIFNNLVNISASAIATVIG), 92–112 (AGVAIATGLLTFVMLVFSEIF), and 126–146 (FFSSHILTSLLKIFYPLVWLM). 2 consecutive CBS domains span residues 208–268 (MVPR…KNEF) and 273–333 (LIRA…FTTS).

It belongs to the UPF0053 family.

Its subcellular location is the cell membrane. This is UPF0053 protein HI_0107 from Haemophilus influenzae (strain ATCC 51907 / DSM 11121 / KW20 / Rd).